The sequence spans 335 residues: Spliceosome-associated protein 49 (335 aa).

RRM domains lie at 13 to 84 (IYLG…PIRV) and 101 to 172 (LFVG…PITV). The tract at residues 204-223 (VTPQSTLPPGFSPATPAPTS) is disordered.

This sequence belongs to the SF3B4 family.

It localises to the nucleus. The sequence is that of Spliceosome-associated protein 49 (sap49) from Schizosaccharomyces pombe (strain 972 / ATCC 24843) (Fission yeast).